Reading from the N-terminus, the 396-residue chain is Elongation factor Tu 2 (396 aa).

The tr-type G domain maps to 10–206; that stretch reads KPHVNVGTIG…TLDTYIPEPE (197 aa). Residues 19 to 26 form a G1 region; it reads GHVDHGKT. 19–26 contributes to the GTP binding site; sequence GHVDHGKT. Position 26 (Thr26) interacts with Mg(2+). The tract at residues 60-64 is G2; it reads GITIN. Positions 81–84 are G3; that stretch reads DCPG. GTP is bound by residues 81 to 85 and 136 to 139; these read DCPGH and NKCD. The G4 stretch occupies residues 136-139; the sequence is NKCD. Positions 174 to 176 are G5; sequence SAL.

The protein belongs to the TRAFAC class translation factor GTPase superfamily. Classic translation factor GTPase family. EF-Tu/EF-1A subfamily. Monomer.

It is found in the cytoplasm. It catalyses the reaction GTP + H2O = GDP + phosphate + H(+). In terms of biological role, GTP hydrolase that promotes the GTP-dependent binding of aminoacyl-tRNA to the A-site of ribosomes during protein biosynthesis. This chain is Elongation factor Tu 2, found in Psychrobacter sp. (strain PRwf-1).